The chain runs to 330 residues: Free fatty acid receptor 2 (330 aa).

Residues 1-8 are Extracellular-facing; the sequence is MTPDWHSS. Residues 9-29 form a helical membrane-spanning segment; it reads LILTAYILIFLTGLPANLLAL. At 30-43 the chain is on the cytoplasmic side; sequence RAFVSRVRQPQPAP. A helical membrane pass occupies residues 44-64; it reads VHILLLNLTLADLLLLLLLPF. Over 65-79 the chain is Extracellular; sequence RIVEAASNFRWYLPK. A helical membrane pass occupies residues 80 to 100; that stretch reads IVCALTGFGFYSSIYCSTWLL. The Cytoplasmic portion of the chain corresponds to 101–126; the sequence is AGISIERYLGVAFPVQYKLSRRPLYG. The chain crosses the membrane as a helical span at residues 127–147; sequence VIAALVAWIMSFGHCTIVIIV. The Extracellular segment spans residues 148 to 184; that stretch reads QYLNSTEQVGTENQITCYENFTQAQLDVVLPVRLELC. N151 and N167 each carry an N-linked (GlcNAc...) asparagine glycan. A helical transmembrane segment spans residues 185-205; sequence LVLFFVPMTVTIFCYWRFVWI. Residues 206–219 lie on the Cytoplasmic side of the membrane; sequence MLTQPHVGAQRRRR. Residues 220–240 form a helical membrane-spanning segment; that stretch reads AVGLAVVTLLNFLVCFGPYNM. At 241–255 the chain is on the extracellular side; sequence SHLVGFHLRQSPSWR. A helical membrane pass occupies residues 256–276; it reads VEAVVFSSLNASLDPLLFYFS. Topologically, residues 277-330 are cytoplasmic; the sequence is SSVVRRAFGKGLLLLRNPGSSMLGRGAEETVEGTKTDRGGSQTEGAQSSDFVTE. Residues 300 to 330 form a disordered region; that stretch reads GRGAEETVEGTKTDRGGSQTEGAQSSDFVTE. Residues 302–314 show a composition bias toward basic and acidic residues; it reads GAEETVEGTKTDR. A compositionally biased stretch (polar residues) spans 315–330; that stretch reads GGSQTEGAQSSDFVTE.

This sequence belongs to the G-protein coupled receptor 1 family. Interacts with FCN1 (via Fibrinogen C-terminal domain). As to expression, detected in whole wall and separated mucosa in the distal ileum and colon. Expressed by enteroendocrine cells expressing peptide YY (PYY) (at protein level).

It is found in the cell membrane. In terms of biological role, g protein-coupled receptor that is activated by a major product of dietary fiber digestion, the short chain fatty acids (SCFAs), and that plays a role in the regulation of whole-body energy homeostasis and in intestinal immunity. In omnivorous mammals, the short chain fatty acids acetate, propionate and butyrate are produced primarily by the gut microbiome that metabolizes dietary fibers. SCFAs serve as a source of energy but also act as signaling molecules. That G protein-coupled receptor is probably coupled to the pertussis toxin-sensitive, G(i/o)-alpha family of G proteins but also to the Gq family. Its activation results in the formation of inositol 1,4,5-trisphosphate, the mobilization of intracellular calcium, the phosphorylation of the MAPK3/ERK1 and MAPK1/ERK2 kinases and the inhibition of intracellular cAMP accumulation. May play a role in glucose homeostasis by regulating the secretion of GLP-1, in response to short-chain fatty acids accumulating in the intestine. May also regulate the production of LEP/Leptin, a hormone acting on the central nervous system to inhibit food intake. Finally, may also regulate whole-body energy homeostasis through adipogenesis regulating both differentiation and lipid storage of adipocytes. In parallel to its role in energy homeostasis, may also mediate the activation of the inflammatory and immune responses by SCFA in the intestine, regulating the rapid production of chemokines and cytokines. May also play a role in the resolution of the inflammatory response and control chemotaxis in neutrophils. In addition to SCFAs, may also be activated by the extracellular lectin FCN1 in a process leading to activation of monocytes and inducing the secretion of interleukin-8/IL-8 in response to the presence of microbes. The protein is Free fatty acid receptor 2 (Ffar2) of Rattus norvegicus (Rat).